A 103-amino-acid polypeptide reads, in one-letter code: Acylphosphatase-2 (103 aa).

Residues 13–103 (SVDYEVFGRV…LQYNGFSTRY (91 aa)) enclose the Acylphosphatase-like domain. Active-site residues include R28 and N46.

Belongs to the acylphosphatase family.

It catalyses the reaction an acyl phosphate + H2O = a carboxylate + phosphate + H(+). In Xenopus tropicalis (Western clawed frog), this protein is Acylphosphatase-2 (acyp2).